The primary structure comprises 380 residues: Cytochrome b (380 aa).

The next 4 helical transmembrane spans lie at 34–54 (FGSL…LLAA), 78–99 (WLIR…YMHV), 114–134 (WNTG…GYVL), and 179–199 (FFTL…IHLT). Heme b-binding residues include His-84 and His-98. Positions 183 and 197 each coordinate heme b. His-202 contacts a ubiquinone. Transmembrane regions (helical) follow at residues 227–247 (LKDI…ALFS), 289–309 (LGGV…PLLH), 321–341 (LSQL…WVGS), and 348–368 (FMII…ILFP).

It belongs to the cytochrome b family. As to quaternary structure, the cytochrome bc1 complex contains 11 subunits: 3 respiratory subunits (MT-CYB, CYC1 and UQCRFS1), 2 core proteins (UQCRC1 and UQCRC2) and 6 low-molecular weight proteins (UQCRH/QCR6, UQCRB/QCR7, UQCRQ/QCR8, UQCR10/QCR9, UQCR11/QCR10 and a cleavage product of UQCRFS1). This cytochrome bc1 complex then forms a dimer. It depends on heme b as a cofactor.

The protein resides in the mitochondrion inner membrane. Its function is as follows. Component of the ubiquinol-cytochrome c reductase complex (complex III or cytochrome b-c1 complex) that is part of the mitochondrial respiratory chain. The b-c1 complex mediates electron transfer from ubiquinol to cytochrome c. Contributes to the generation of a proton gradient across the mitochondrial membrane that is then used for ATP synthesis. The sequence is that of Cytochrome b (MT-CYB) from Balearica pavonina (Black crowned-crane).